Here is a 332-residue protein sequence, read N- to C-terminus: DNA-directed RNA polymerase subunit alpha (332 aa).

The alpha N-terminal domain (alpha-NTD) stretch occupies residues 2 to 234; the sequence is TVTANQVLRP…DQLSVFGDFT (233 aa). The tract at residues 248–332 is alpha C-terminal domain (alpha-CTD); that stretch reads VDPVLLRPID…AGVAQHGMLG (85 aa).

The protein belongs to the RNA polymerase alpha chain family. Homodimer. The RNAP catalytic core consists of 2 alpha, 1 beta, 1 beta' and 1 omega subunit. When a sigma factor is associated with the core the holoenzyme is formed, which can initiate transcription.

It catalyses the reaction RNA(n) + a ribonucleoside 5'-triphosphate = RNA(n+1) + diphosphate. DNA-dependent RNA polymerase catalyzes the transcription of DNA into RNA using the four ribonucleoside triphosphates as substrates. This Xanthomonas axonopodis pv. citri (strain 306) protein is DNA-directed RNA polymerase subunit alpha.